A 445-amino-acid polypeptide reads, in one-letter code: UPF0210 protein SSA_2018 (445 aa).

This sequence belongs to the UPF0210 family. As to quaternary structure, homodimer.

In Streptococcus sanguinis (strain SK36), this protein is UPF0210 protein SSA_2018.